The following is a 96-amino-acid chain: Small ubiquitin-related modifier 2 (96 aa).

A Glycyl lysine isopeptide (Lys-Gly) (interchain with G-Cter in SUMO) cross-link involves residue K11. A Ubiquitin-like domain is found at D16 to I96. Residue G93 forms a Glycyl lysine isopeptide (Gly-Lys) (interchain with K-? in acceptor proteins) linkage. Positions H94 to I96 are excised as a propeptide.

The protein belongs to the ubiquitin family. SUMO subfamily. Interacts with sae2 and ube2i. Covalently attached to a number of proteins. In terms of processing, polymeric chains can be formed through Lys-11 cross-linking. Post-translationally, cleavage of precursor form by a sentrin-specific protease is necessary for function.

The protein resides in the nucleus. Ubiquitin-like protein that can be covalently attached to proteins as a monomer or as a lysine-linked polymer. Covalent attachment via an isopeptide bond to its substrates requires prior activation by the E1 complex sae1-sae2 and linkage to the E2 enzyme ube2i, and can be promoted by an E3 ligase such as pias1-4. This post-translational modification on lysine residues of proteins plays a crucial role in a number of cellular processes such as nuclear transport, DNA replication and repair, mitosis and signal transduction. Polymeric sumo2 chains are also susceptible to polyubiquitination which functions as a signal for proteasomal degradation of modified proteins. In Danio rerio (Zebrafish), this protein is Small ubiquitin-related modifier 2.